A 272-amino-acid chain; its full sequence is Acetylglutamate kinase (272 aa).

Substrate contacts are provided by residues 46-47 (GA), R68, and N166.

This sequence belongs to the acetylglutamate kinase family. ArgB subfamily.

It is found in the cytoplasm. It catalyses the reaction N-acetyl-L-glutamate + ATP = N-acetyl-L-glutamyl 5-phosphate + ADP. Its pathway is amino-acid biosynthesis; L-arginine biosynthesis; N(2)-acetyl-L-ornithine from L-glutamate: step 2/4. In terms of biological role, catalyzes the ATP-dependent phosphorylation of N-acetyl-L-glutamate. This Dehalococcoides mccartyi (strain CBDB1) protein is Acetylglutamate kinase.